The chain runs to 94 residues: Selenoprotein K (94 aa).

The helical transmembrane segment at 20-42 (LSLITDFFWGIAEFVVLFFKTLL) threads the bilayer. Residues 47–94 (KKGRGYRNSSDSRYDDGRGPPGNPPRRMGRISHLHGPSPPPMAGGUGR) are disordered. U92 is a non-standard amino acid (selenocysteine).

This sequence belongs to the selenoprotein K family. As to quaternary structure, interacts with DERL1, DERL2, DERL3 and SELENOS. The SELENOK-SELENOS complex interacts with VCP. Interacts with ZDHHC6. In terms of processing, cleaved by CAPN2/m-calpain in resting macrophages but not in activated macrophages. Macrophage activation up-regulates expression of the calpain inhibitor CAST/calpastatin, resulting in inhibition of CAPN2 activity. Truncated SELENOK proteins produced by failed UGA/Sec decoding are ubiquitinated by the CRL2(KLHDC2) complex, which recognizes the diglycine (Gly-Gly) at the C-terminus of truncated SELENOK proteins.

The protein resides in the endoplasmic reticulum membrane. The protein localises to the cell membrane. Its function is as follows. Required for Ca(2+) flux in immune cells and plays a role in T-cell proliferation and in T-cell and neutrophil migration. Involved in endoplasmic reticulum-associated degradation (ERAD) of soluble glycosylated proteins. Required for palmitoylation and cell surface expression of CD36 and involved in macrophage uptake of low-density lipoprotein and in foam cell formation. Together with ZDHHC6, required for palmitoylation of ITPR1 in immune cells, leading to regulate ITPR1 stability and function. Plays a role in protection of cells from ER stress-induced apoptosis. Protects cells from oxidative stress when overexpressed in cardiomyocytes. This chain is Selenoprotein K, found in Chinchilla lanigera (Long-tailed chinchilla).